The sequence spans 446 residues: Mycosin-1 (446 aa).

The first 21 residues, 1 to 21 (MHRIFLITVALALLTASPASA), serve as a signal peptide directing secretion. The segment at 24–43 (PPPIDPGALPPDVTGPDQPT) is disordered. The Peptidase S8 domain maps to 64–387 (PWSNTYLGVA…AGVIDAVAAL (324 aa)). Catalysis depends on charge relay system residues aspartate 90, histidine 121, and serine 332. Residues 419-439 (ITAVALVAVGLTLALGLGALA) traverse the membrane as a helical segment.

The protein belongs to the peptidase S8 family.

The protein resides in the cell membrane. Functionally, may play a dual role in regulation of ESX-1 secretion and virulence. Acts as a protease that cleaves EspB. Essential for ESX-1 function, required for early replication in macrophages and full virulence in mice. The sequence is that of Mycosin-1 from Mycobacterium tuberculosis (strain ATCC 25618 / H37Rv).